Consider the following 1818-residue polypeptide: MNDTDKKFPLQPVYDTGFDDGYLQRDYEKCLESAAANDAQTVELQTQLLAEIKNLENEIKALKAQESRQPDPHNNARIQSLEASLNRLVNEYNNFEFQKNYMVDRVAELNNKARFFKDELKRLQQENAAFVNSRYANWADFQSNYQLKLDQFQALIDQQNQTIKQLNEQIAANQGLIDQNVQRLQQNHSLDQQERDALLYEVDHLYNELYELENQKRLVGIEYEATYQDLVSADAELQNVYETIAQNQANFQKQCDAYWAQLKQVEQQIQTTKQELVDEESTLKVRLNDADFYINSRLAELDDLTSKINERDFVSKEQAQDVKASLANLTKEKERLSAEKDSFERLRNTALNDINRMEQENALFAKHLEQQQYEFERKQQESLLKLETEHKQLQKRIGEFKIESEAKSEALLIQERELLEKRREIDDLLTQASLEYEQQRRTNQVLKEKHRQVQQHFQNLVHAKKKLDQKRHYLAEQKRIDEEQIFKLKEKIATERRELEKLYLVKKQKQDQKENDLLIFEKQLRQYQADFENEIEEKQNELFASQKSLQKSFTQLKNKEAELNQKAQKIAEDWAHLKQNKHHHADLEIFLEGEFNHLQQEKHKLLEARTQFDNRVSLLSARFKQKQAELVKQKQSLEQLTAAFNKEQEAVERDWKDRLANLEKQKEMLGDKVHQFDENSLNISKKLAERELAIKFKEKELEAAQKQLSLDNNNNAGLKLQLDKLSESLKTERLELEASKERILDFYDESSRRIADYESDLQARLAEVKTLEKNQQETAAKSERELKVALEKLNQAKKAFLQIRKQQLLEIASVKQQLAQKANLLKNQQAELDKQTEELEAAFLEQDTDKKELEKALHSVKSKQELLERERSFLLQKQREFAEHVAGFKRQVHFKTTQMQRLSEFNKQQQSEQIKRETELKIAFADLKKDYQLFELQKNQEFQQIEQKHKELELLAQKQAELKQELEQKATALASQDQDTVQAKLDLARQQHELELRQNAFNQASLSLNKQREQLTNQVKVLHGELKKRHEKLTLKDRLLAEKEKDQHKKDAEINQRFKQFENEYADFDQAKKRELQELNQIRRNLEQSNASLLKKRNQLTLDFALLRKVQHNTQTNRVQLNTQIKEFLLEKKNFQKASDEAALQKALLIKRLRSFASKLQLQREALAIQKLEFDKRDEQQKSEINNAKLQLEQFKLEKQNFDEAKQKQLIEFKDQCQRLDVEKRLLKQKLVQLKNLSKSYLTYKNRADLSQQQLQHKYANLLELKEKLQTAKRALDKKHRAIYGKMAQFVSELRQEKKQLLSAQKQVDDKSRLLEQNQRHLQNLSSETKKKRQSLEHDINKFDQRRKEAVSSILNSHKKLKQKEGELQGILQKLSLKKTQIEQEFSKLYQQREKLDRQRTTLSKLHRELKAQNEATAHKNREVLEIENYYKKELQRLTTEKSEFDNNKNRLFEYFRKIRNEIEKKEAHIKTVLEETQKKRHLVETEAVKLHLQKQSIISKGQELKEIKERVSRDISHTNKQREELNSLLHQNKLLQKNLAEREREINNKDSLLTQKIQTAKQKLSEKEARILKLLEKMRAVEQQYQAEITRLKTRNADLEKNDNKHLFPPLFKINGNDMNYPYPYPWFYPQQKQEDSSNQIRHLFEQQLQFMQQRYENELTELRRQRALLEKKLDQIQLESQLSAKKNDFEKVEQMMQKLLEKTEQKLSAFDQKINALAEQINTQKAEHADSEKQQLLLRIEQLEKQNLAQAVQTPQPVQPVVQAPAVVPQVIQPQVVQSQPAFLATQQSISKQQQIAQLNAEINSIKKLIAQKAAK.

Coiled coils occupy residues Leu31–Glu880, Glu919–His1607, His1644–Gln1755, and Leu1786–Ala1817.

Post-translationally, phosphorylated mainly on serine residues.

Component of the cytoskeleton-like structure which stabilizes the shape of the wall-less Mycoplasma. This cytoskeleton-like network of accessory proteins containing HMW proteins 1 to 5 allows the proper anchoring of cytadhesin proteins in the mycoplasmal membrane at the attachment organelle. In Mycoplasma pneumoniae (strain ATCC 29342 / M129 / Subtype 1) (Mycoplasmoides pneumoniae), this protein is Cytadherence high molecular weight protein 2 (hmw2).